The following is a 402-amino-acid chain: Serine/threonine transporter SstT (402 aa).

9 helical membrane passes run Ile-19–Leu-39, Leu-43–Ala-63, Thr-86–Leu-106, Ala-138–Met-158, Val-179–Ile-199, Leu-212–Ile-232, Ile-287–Leu-307, Val-327–Ile-347, and Phe-354–Ile-374.

Belongs to the dicarboxylate/amino acid:cation symporter (DAACS) (TC 2.A.23) family.

The protein localises to the cell membrane. The enzyme catalyses L-serine(in) + Na(+)(in) = L-serine(out) + Na(+)(out). The catalysed reaction is L-threonine(in) + Na(+)(in) = L-threonine(out) + Na(+)(out). Involved in the import of serine and threonine into the cell, with the concomitant import of sodium (symport system). This is Serine/threonine transporter SstT from Streptococcus agalactiae serotype III (strain NEM316).